Here is a 141-residue protein sequence, read N- to C-terminus: Small ribosomal subunit protein eS17w (141 aa).

The protein belongs to the eukaryotic ribosomal protein eS17 family.

The polypeptide is Small ribosomal subunit protein eS17w (RPS17D) (Arabidopsis thaliana (Mouse-ear cress)).